The following is a 120-amino-acid chain: Large ribosomal subunit protein bL12 (120 aa).

This sequence belongs to the bacterial ribosomal protein bL12 family. Homodimer. Part of the ribosomal stalk of the 50S ribosomal subunit. Forms a multimeric L10(L12)X complex, where L10 forms an elongated spine to which 2 to 4 L12 dimers bind in a sequential fashion. Binds GTP-bound translation factors.

In terms of biological role, forms part of the ribosomal stalk which helps the ribosome interact with GTP-bound translation factors. Is thus essential for accurate translation. The protein is Large ribosomal subunit protein bL12 of Listeria innocua serovar 6a (strain ATCC BAA-680 / CLIP 11262).